The following is a 478-amino-acid chain: GDP-fucose protein O-fucosyltransferase 3 (478 aa).

The Cytoplasmic portion of the chain corresponds to 1 to 9 (MVRIQRGKL). Residues 10-30 (LAFCLCVMATVFLLITLQVVV) form a helical; Signal-anchor for type II membrane protein membrane-spanning segment. Over 31-478 (ELGKFEGKKF…QEFWALVFKD (448 aa)) the chain is Lumenal. N-linked (GlcNAc...) asparagine glycans are attached at residues Asn110 and Asn168. A disulfide bridge connects residues Cys389 and Cys392.

The protein belongs to the glycosyltransferase 10 family.

Its subcellular location is the endoplasmic reticulum membrane. It carries out the reaction L-threonyl-[protein] + GDP-beta-L-fucose = 3-O-(alpha-L-fucosyl)-L-threonyl-[protein] + GDP + H(+). The catalysed reaction is L-seryl-[protein] + GDP-beta-L-fucose = 3-O-(alpha-L-fucosyl)-L-seryl-[protein] + GDP + H(+). It functions in the pathway protein modification; protein glycosylation. In terms of biological role, protein O-fucosyltransferase that specifically catalyzes O-fucosylation of serine or threonine residues in EMI domains of target proteins, such as MMRN1, MMRN2 and EMID1. Attaches fucose through an O-glycosidic linkage. O-fucosylation of EMI domain-containing proteins may be required for facilitating protein folding and secretion. May also show alpha-(1,3)-fucosyltransferase activity toward the innermost N-acetyl glucosamine (GlcNAc) residue in biantennary N-glycan acceptors. However, this was tested with a library of synthetic substrates and this activity is unsure in vivo. May be involved in biosynthesis of Lewis X-carrying biantennary N-glycans that regulate neuron stem cell self-renewal during brain development. This is GDP-fucose protein O-fucosyltransferase 3 (FUT10) from Bos taurus (Bovine).